A 554-amino-acid chain; its full sequence is Valerianol synthase TPS1F (554 aa).

2 residues coordinate Mg(2+): Asp307 and Asp311. The DDXXD motif signature appears at 326–330 (VQRWD). Mg(2+) is bound by residues Asp452, Ser456, and Glu460.

It belongs to the terpene synthase family. It depends on Mg(2+) as a cofactor.

The enzyme catalyses (2E,6E)-farnesyl diphosphate + H2O = valerianol + diphosphate. It functions in the pathway secondary metabolite biosynthesis; terpenoid biosynthesis. Functionally, terpene synthase that catalyzes the biosynthesis of the terpene valerianol, which is a volatile compound of floral scent. The sequence is that of Valerianol synthase TPS1F from Camellia hiemalis (Camellia).